The primary structure comprises 399 residues: Forkhead box protein I3 (399 aa).

3 disordered regions span residues 87–109 (AGAQRGFAQPSASAPASPAGSAA), 221–287 (KRRR…ASTL), and 307–353 (SSSS…STVG). Residues 96–109 (PSASAPASPAGSAA) show a composition bias toward low complexity. A phosphoserine mark is found at Ser99 and Ser103. Residues 129 to 223 (RPPYSYSALI…DNGNFRRKRR (95 aa)) constitute a DNA-binding region (fork-head). Residues 219 to 225 (RRKRRRR) carry the Nuclear localization signal motif. Polar residues-rich tracts occupy residues 228–248 (ASSNLTVPSGTSKSEGQSSRL) and 258–267 (SPSSILRPSQ). Phosphoserine is present on residues Ser258, Ser266, and Ser268. Polar residues-rich tracts occupy residues 275-287 (TKSTASSPGASTL), 307-317 (SSSSMGNQRTL), and 328-353 (QLPSSTFPNTSVPDSSPDSMQLSTVG). The 9aaTAD signature appears at 385-393 (SMVNSLIYP).

Phosphorylation promotes the transcription factor activity. Dephosphorylation by protein phosphatase 2A (PP2A) reduces its activity. Specifically expressed in the epithelium in developing ectodermal appendages. Expressed in pharyngeal endoderm and ectoderm. Expressed in pre-placodal ectoderm. Down-regulated as the otic placode is induced. Expressed in teeth and hair follicles throughout embryogenesis. Expressed in mammary glands only during the earliest stages of development.

The protein resides in the nucleus. In terms of biological role, transcription factor required for pharyngeal arch development, which is involved in hair, ear, jaw and dental development. May act as a pioneer transcription factor during pharyngeal arch development. Required for epithelial cell differentiation within the epidermis. Acts at multiple stages of otic placode induction: necessary for preplacodal ectoderm to execute an inner ear program. Required for hair follicle stem cell specification. Acts downstream of TBX1 for the formation of the thymus and parathyroid glands from the third pharyngeal pouch. This is Forkhead box protein I3 from Mus musculus (Mouse).